Consider the following 461-residue polypeptide: Dihydrolipoyl dehydrogenase (461 aa).

FAD-binding positions include 34-42 (EEDQAGGTC), lysine 51, and glycine 114. Cysteine 42 and cysteine 47 are joined by a disulfide. Residues 177 to 181 (GGGVI), glutamate 200, and 261 to 264 (AIGR) contribute to the NAD(+) site. 2 residues coordinate FAD: aspartate 304 and alanine 312. The active-site Proton acceptor is the histidine 436.

Belongs to the class-I pyridine nucleotide-disulfide oxidoreductase family. FAD serves as cofactor.

It localises to the cytoplasm. It catalyses the reaction N(6)-[(R)-dihydrolipoyl]-L-lysyl-[protein] + NAD(+) = N(6)-[(R)-lipoyl]-L-lysyl-[protein] + NADH + H(+). In terms of biological role, the branched-chain alpha-keto dehydrogenase complex catalyzes the overall conversion of alpha-keto acids to acyl-CoA and CO(2). It contains multiple copies of 3 enzymatic components: branched-chain alpha-keto acid decarboxylase (E1), lipoamide acyltransferase (E2) and lipoamide dehydrogenase (E3). The chain is Dihydrolipoyl dehydrogenase (lpdA) from Chlamydia pneumoniae (Chlamydophila pneumoniae).